Here is a 351-residue protein sequence, read N- to C-terminus: Putative ABC transporter permease protein MJ0876 (351 aa).

A run of 9 helical transmembrane segments spans residues 4-24 (VGIL…ALYL), 59-79 (LPPI…GLML), 99-119 (VLMV…FEIF), 124-144 (ILVA…IIAL), 152-172 (VIIV…YLIA), 196-216 (GDVI…MFLI), 249-269 (FITG…IIAP), 284-304 (LVPA…ILSL), and 322-342 (PLPI…YLVY).

The protein belongs to the binding-protein-dependent transport system permease family. FecCD subfamily.

It is found in the cell membrane. Probably part of a binding-protein-dependent transport system. Probably responsible for the translocation of the substrate across the membrane. The sequence is that of Putative ABC transporter permease protein MJ0876 from Methanocaldococcus jannaschii (strain ATCC 43067 / DSM 2661 / JAL-1 / JCM 10045 / NBRC 100440) (Methanococcus jannaschii).